We begin with the raw amino-acid sequence, 389 residues long: Probable inactive purple acid phosphatase 29 (389 aa).

Positions Met-1 to Ala-34 are cleaved as a signal peptide. Asn-80 is a glycosylation site (N-linked (GlcNAc...) asparagine). Residue Asn-136 participates in substrate binding. Residue Asn-136 coordinates Zn(2+). 2 N-linked (GlcNAc...) asparagine glycosylation sites follow: Asn-191 and Asn-267. His-303 contributes to the Zn(2+) binding site. His-303–His-305 serves as a coordination point for substrate. His-305 contributes to the Fe cation binding site. N-linked (GlcNAc...) asparagine glycosylation occurs at Asn-380.

Belongs to the metallophosphoesterase superfamily. Purple acid phosphatase family. In terms of assembly, homodimer. Requires Fe cation as cofactor. Zn(2+) is required as a cofactor. Expressed in roots, stems, leaves, flowers and siliques.

The protein resides in the secreted. This Arabidopsis thaliana (Mouse-ear cress) protein is Probable inactive purple acid phosphatase 29 (PAP29).